The chain runs to 238 residues: Putative type I specificity subunit S.MpnORF201P (238 aa).

Belongs to the type-I restriction system S methylase family. In terms of assembly, the methyltransferase is composed of M and S polypeptides.

Functionally, the specificity (S) subunit of a type I methyltransferase (MTase); this subunit dictates DNA sequence specificity. The single R subunit has multiple frameshifts and is probably not expressed. This Mycoplasma pneumoniae (strain ATCC 29342 / M129 / Subtype 1) (Mycoplasmoides pneumoniae) protein is Putative type I specificity subunit S.MpnORF201P.